Here is a 96-residue protein sequence, read N- to C-terminus: Muconolactone Delta-isomerase (96 aa).

Belongs to the muconolactone Delta-isomerase family. Homodecamer.

The enzyme catalyses (S)-muconolactone = (4,5-dihydro-5-oxofuran-2-yl)-acetate. It functions in the pathway aromatic compound metabolism; beta-ketoadipate pathway; 5-oxo-4,5-dihydro-2-furylacetate from catechol: step 3/3. This Acinetobacter baylyi (strain ATCC 33305 / BD413 / ADP1) protein is Muconolactone Delta-isomerase (catC).